A 186-amino-acid chain; its full sequence is Elongation factor P (186 aa).

Belongs to the elongation factor P family.

The protein resides in the cytoplasm. It participates in protein biosynthesis; polypeptide chain elongation. In terms of biological role, involved in peptide bond synthesis. Stimulates efficient translation and peptide-bond synthesis on native or reconstituted 70S ribosomes in vitro. Probably functions indirectly by altering the affinity of the ribosome for aminoacyl-tRNA, thus increasing their reactivity as acceptors for peptidyl transferase. This is Elongation factor P from Ruminiclostridium cellulolyticum (strain ATCC 35319 / DSM 5812 / JCM 6584 / H10) (Clostridium cellulolyticum).